The primary structure comprises 506 residues: Lysine--tRNA ligase (506 aa).

The Mg(2+) site is built by Glu-411 and Glu-418.

This sequence belongs to the class-II aminoacyl-tRNA synthetase family. As to quaternary structure, homodimer. The cofactor is Mg(2+).

The protein resides in the cytoplasm. The enzyme catalyses tRNA(Lys) + L-lysine + ATP = L-lysyl-tRNA(Lys) + AMP + diphosphate. The protein is Lysine--tRNA ligase of Thermosynechococcus vestitus (strain NIES-2133 / IAM M-273 / BP-1).